The chain runs to 428 residues: Phosphomethylpyrimidine synthase 1 (428 aa).

Substrate contacts are provided by residues Met94, Tyr123, His162, 184–186 (SRG), 225–228 (NGMR), and Glu264. His268 serves as a coordination point for Zn(2+). Tyr291 is a substrate binding site. His332 is a Zn(2+) binding site. Residues Cys408, Cys411, and Cys415 each contribute to the [4Fe-4S] cluster site.

The protein belongs to the ThiC family. It depends on [4Fe-4S] cluster as a cofactor.

It catalyses the reaction 5-amino-1-(5-phospho-beta-D-ribosyl)imidazole + S-adenosyl-L-methionine = 4-amino-2-methyl-5-(phosphooxymethyl)pyrimidine + CO + 5'-deoxyadenosine + formate + L-methionine + 3 H(+). It participates in cofactor biosynthesis; thiamine diphosphate biosynthesis. Its function is as follows. Catalyzes the synthesis of the hydroxymethylpyrimidine phosphate (HMP-P) moiety of thiamine from aminoimidazole ribotide (AIR) in a radical S-adenosyl-L-methionine (SAM)-dependent reaction. The sequence is that of Phosphomethylpyrimidine synthase 1 from Methanosarcina barkeri (strain Fusaro / DSM 804).